Reading from the N-terminus, the 502-residue chain is DGEQALQASLSVKEKLQIALCLEKIGVDIMEIGFPISSPGDFKSVQIISKNIKNSRICSLARCVEKDIDAAGEAMSASNSFRIHIFLATSTLHMEYKLKKNFHEIIDMAIFAVKRALRYTDDIEFSCEDASRTTIDNLCRIVEKLIYHGVKTINIPDTVGYTVPNELSYIIKNLLERVPNIHKSIISVHCHDDLGMAVGNSISAIQAGARQIEGTINGIGERAGNTALEEVIMAIKVREDILGVSTNINYKEIYHTSKIISRICNMPIPPNKAIVGSNAFSHSSGIHQDGVLKNRKNYEIIDPSSIGFKKLKLNLTSRSGRAAVKYYMSEMGYKDTDYNIDELYADFLKLADKKGQVFDYDLESLAFISKHPEELEHFCLKFFSVQSISNGLSTASIKLLCGQKLYIESSTTSNGPVDAIYQALNKITNFPIILQKFQLIAKGKGKDALGQVNILIEYKKRKFHGIGLATDFIESSAKAMVNVLNNIWQAEQVNKKLQELKK.

Mn(2+) contacts are provided by D1, H189, H191, and N225. The region spanning 1 to 254 (DGEQALQASL…STNINYKEIY (254 aa)) is the Pyruvate carboxyltransferase domain. Residues 379-502 (CLKFFSVQSI…VNKKLQELKK (124 aa)) form a regulatory domain region.

Belongs to the alpha-IPM synthase/homocitrate synthase family. LeuA type 1 subfamily. In terms of assembly, homodimer. The cofactor is Mn(2+).

It localises to the cytoplasm. It carries out the reaction 3-methyl-2-oxobutanoate + acetyl-CoA + H2O = (2S)-2-isopropylmalate + CoA + H(+). The protein operates within amino-acid biosynthesis; L-leucine biosynthesis; L-leucine from 3-methyl-2-oxobutanoate: step 1/4. In terms of biological role, catalyzes the condensation of the acetyl group of acetyl-CoA with 3-methyl-2-oxobutanoate (2-ketoisovalerate) to form 3-carboxy-3-hydroxy-4-methylpentanoate (2-isopropylmalate). The protein is 2-isopropylmalate synthase of Buchnera aphidicola subsp. Macrosiphoniella ludovicianae.